Here is a 1310-residue protein sequence, read N- to C-terminus: Zinc finger protein 521 (1310 aa).

The segment covering 1-10 (MSRRKQAKPR) has biased composition (basic residues). Positions 1 to 46 (MSRRKQAKPRSLKDPNCKLEDTSEDGESPDCKKRQEEGDELEEEEA) are disordered. The segment covering 11–21 (SLKDPNCKLED) has biased composition (basic and acidic residues). The C2H2-type 1; degenerate zinc-finger motif lies at 48-68 (HSCDSCLQVFESLSDITEHKI). Residues 82 to 106 (DPTCSWPASSPSSKDQASPIHGEGF) form a disordered region. Residues 87–97 (WPASSPSSKDQ) show a composition bias toward polar residues. 7 C2H2-type zinc fingers span residues 119-141 (YPCQ…EQSH), 147-169 (FKCT…IKLH), 175-197 (YHCS…LKTH), 203-225 (YKCA…MQVH), 247-270 (QKCS…AECH), 282-305 (LQCM…EQIH), and 311-333 (NSCN…MDSH). The C2H2-type 9; degenerate zinc-finger motif lies at 404–428 (YSCIYCSKQLFSSLAVLQIHLKTMH). 3 consecutive C2H2-type zinc fingers follow at residues 436–459 (HICQ…KQVH), 476–499 (YQCN…RSSH), and 512–535 (FFCP…RQVH). A C2H2-type 13; atypical zinc finger spans residues 559–584 (YSCSYCTNSPIFNSVLKLNKHIKENH). 7 C2H2-type zinc fingers span residues 633-655 (YICN…LKTH), 663-685 (LTCP…VTIH), 693-716 (YICE…LDMH), 721-744 (FRCT…AVKH), 751-774 (YRCT…KHNH), 782-804 (HKCI…ITTH), and 808-831 (YNCK…REKH). The C2H2-type 21; degenerate zinc finger occupies 885-907 (YGCDICGAAYTMESLLQNHQLRD). 3 C2H2-type zinc fingers span residues 929–951 (YKCN…MQTH), 958–980 (YMCP…KVTH), and 1019–1041 (FRCV…GTFH). The C2H2-type 25; degenerate zinc finger occupies 1064-1082 (YKCASCLKEFRSKQDLVKL). 5 consecutive C2H2-type zinc fingers follow at residues 1138–1161 (TRCS…QTIH), 1194–1216 (YQCI…VANH), 1224–1246 (HECK…LIEH), 1255–1278 (FKCP…FSAH), and 1285–1308 (YDCA…MSQH).

Belongs to the krueppel C2H2-type zinc-finger protein family.

The protein resides in the nucleus. Functionally, transcription factor that can both act as an activator or a repressor depending on the context. Involved in BMP signaling and in the regulation of the immature compartment of the hematopoietic system. The sequence is that of Zinc finger protein 521 (znf521) from Xenopus laevis (African clawed frog).